The primary structure comprises 725 residues: Threonine--tRNA ligase, cytoplasmic (725 aa).

The region spanning Glu-80 to Lys-142 is the TGS domain.

It belongs to the class-II aminoacyl-tRNA synthetase family.

It is found in the cytoplasm. The catalysed reaction is tRNA(Thr) + L-threonine + ATP = L-threonyl-tRNA(Thr) + AMP + diphosphate + H(+). The polypeptide is Threonine--tRNA ligase, cytoplasmic (Caenorhabditis elegans).